The sequence spans 418 residues: AP-3 complex subunit mu-2 (418 aa).

The region spanning 176-417 (NNEAYFDVVE…MTKAGKFQVR (242 aa)) is the MHD domain.

The protein belongs to the adaptor complexes medium subunit family. As to quaternary structure, adaptor protein complex 3 (AP-3) is a heterotetramer composed of two large adaptins (delta-type subunit AP3D1 and beta-type subunit AP3B1 or AP3B2), a medium adaptin (mu-type subunit AP3M1 or AP3M2) and a small adaptin (sigma-type subunit APS1 or AP3S2). AP-3 associates with the BLOC-1 complex.

It is found in the golgi apparatus. It localises to the cytoplasmic vesicle membrane. In terms of biological role, component of the adaptor complexes which link clathrin to receptors in coated vesicles. Clathrin-associated protein complexes are believed to interact with the cytoplasmic tails of membrane proteins, leading to their selection and concentration. Ap47 is a subunit of the plasma membrane adaptor. In concert with the BLOC-1 complex, AP-3 is required to target cargos into vesicles assembled at cell bodies for delivery into neurites and nerve terminals. The sequence is that of AP-3 complex subunit mu-2 (Ap3m2) from Mus musculus (Mouse).